Here is a 120-residue protein sequence, read N- to C-terminus: NAD(P)H-quinone oxidoreductase subunit 3, chloroplastic (120 aa).

3 consecutive transmembrane segments (helical) span residues 9 to 29 (FFWA…FISG), 64 to 84 (MFAL…PWAM), and 88 to 108 (VLGV…IIGL).

This sequence belongs to the complex I subunit 3 family. NDH is composed of at least 16 different subunits, 5 of which are encoded in the nucleus.

The protein localises to the plastid. It is found in the chloroplast thylakoid membrane. It carries out the reaction a plastoquinone + NADH + (n+1) H(+)(in) = a plastoquinol + NAD(+) + n H(+)(out). The catalysed reaction is a plastoquinone + NADPH + (n+1) H(+)(in) = a plastoquinol + NADP(+) + n H(+)(out). NDH shuttles electrons from NAD(P)H:plastoquinone, via FMN and iron-sulfur (Fe-S) centers, to quinones in the photosynthetic chain and possibly in a chloroplast respiratory chain. The immediate electron acceptor for the enzyme in this species is believed to be plastoquinone. Couples the redox reaction to proton translocation, and thus conserves the redox energy in a proton gradient. The polypeptide is NAD(P)H-quinone oxidoreductase subunit 3, chloroplastic (Atropa belladonna (Belladonna)).